The following is a 650-amino-acid chain: DNA gyrase subunit B (650 aa).

Residues Asn-429–Pro-543 form the Toprim domain. The Mg(2+) site is built by Glu-435, Asp-508, and Asp-510.

The protein belongs to the type II topoisomerase GyrB family. Heterotetramer, composed of two GyrA and two GyrB chains. In the heterotetramer, GyrA contains the active site tyrosine that forms a transient covalent intermediate with DNA, while GyrB binds cofactors and catalyzes ATP hydrolysis. Requires Mg(2+) as cofactor. The cofactor is Mn(2+). It depends on Ca(2+) as a cofactor.

It is found in the cytoplasm. It catalyses the reaction ATP-dependent breakage, passage and rejoining of double-stranded DNA.. Functionally, a type II topoisomerase that negatively supercoils closed circular double-stranded (ds) DNA in an ATP-dependent manner to modulate DNA topology and maintain chromosomes in an underwound state. Negative supercoiling favors strand separation, and DNA replication, transcription, recombination and repair, all of which involve strand separation. Also able to catalyze the interconversion of other topological isomers of dsDNA rings, including catenanes and knotted rings. Type II topoisomerases break and join 2 DNA strands simultaneously in an ATP-dependent manner. The chain is DNA gyrase subunit B from Streptococcus pyogenes serotype M18 (strain MGAS8232).